Here is a 225-residue protein sequence, read N- to C-terminus: Cell division protein SepF (225 aa).

Positions 21-134 are disordered; it reads DEYLDEPEPT…GPLFDEGGPL (114 aa). Composition is skewed to basic and acidic residues over residues 28-54, 77-86, and 115-127; these read EPTRRPARPARDSGRDPYHDRDDRDFA, RYESPRHSSR, and TRSDRVESRRGPL.

This sequence belongs to the SepF family. In terms of assembly, homodimer. Interacts with FtsZ.

It is found in the cytoplasm. In terms of biological role, cell division protein that is part of the divisome complex and is recruited early to the Z-ring. Probably stimulates Z-ring formation, perhaps through the cross-linking of FtsZ protofilaments. Its function overlaps with FtsA. This Rhodococcus opacus (strain B4) protein is Cell division protein SepF.